The sequence spans 147 residues: MVSSVKMILALTVLATVACTGYAIKCYQCDSLTNSECGKDIKSDSSLVLDCTKMAPPRFLQNFFPVRNATGCMKQTIDIPGNPQIVRSCYFGNIADTKVGCQTDPSLTINKLLSCEVCTEDECNGTSSLAPIAGVILLFFGLARLLA.

A signal peptide spans 1-23; sequence MVSSVKMILALTVLATVACTGYA. Residues 24–126 are Extracellular-facing; the sequence is IKCYQCDSLT…VCTEDECNGT (103 aa). Cystine bridges form between C26–C72, C29–C37, C51–C89, C101–C115, and C118–C123. N68 is a glycosylation site (N-linked (GlcNAc...) asparagine). The GPI-anchor amidated asparagine moiety is linked to residue N124. Residues 125–147 constitute a propeptide, removed in mature form; it reads GTSSLAPIAGVILLFFGLARLLA. The chain crosses the membrane as a helical span at residues 127–147; it reads SSLAPIAGVILLFFGLARLLA.

Belongs to the quiver family.

The protein resides in the cell membrane. Functionally, may be involved in regulating neuron excitability. This is UPAR/Ly6 domain-containing protein CG9338 from Drosophila melanogaster (Fruit fly).